Reading from the N-terminus, the 128-residue chain is Aspartate 1-decarboxylase (128 aa).

S25 functions as the Schiff-base intermediate with substrate; via pyruvic acid in the catalytic mechanism. Position 25 is a pyruvic acid (Ser) (S25). Position 57 (T57) interacts with substrate. The active-site Proton donor is Y58. Substrate is bound at residue 73–75; it reads GSA.

This sequence belongs to the PanD family. Heterooctamer of four alpha and four beta subunits. Pyruvate serves as cofactor. In terms of processing, is synthesized initially as an inactive proenzyme, which is activated by self-cleavage at a specific serine bond to produce a beta-subunit with a hydroxyl group at its C-terminus and an alpha-subunit with a pyruvoyl group at its N-terminus.

It is found in the cytoplasm. The enzyme catalyses L-aspartate + H(+) = beta-alanine + CO2. It functions in the pathway cofactor biosynthesis; (R)-pantothenate biosynthesis; beta-alanine from L-aspartate: step 1/1. Catalyzes the pyruvoyl-dependent decarboxylation of aspartate to produce beta-alanine. The polypeptide is Aspartate 1-decarboxylase (Burkholderia multivorans (strain ATCC 17616 / 249)).